A 135-amino-acid polypeptide reads, in one-letter code: U-myrmeciitoxin(01)-Mg7a (135 aa).

The N-terminal stretch at 1 to 21 (MKLSCLSLALAIILLLAIVHS) is a signal peptide. Positions 22-72 (PNMEVKALAGPEADAIGFADAFGEADAFGEADAFGEADAFGEADAFGEADA) are excised as a propeptide. A disordered region spans residues 69 to 95 (EADAKRSKSSSKTKPKKPKKPKKKIKI). The segment covering 75–93 (SKSSSKTKPKKPKKPKKKI) has biased composition (basic residues). S120 carries O-linked (GalNAc...) serine glycosylation. Residues T129 and T130 are each glycosylated (O-linked (GalNAc...) threonine).

Belongs to the formicidae venom precursor-01 superfamily. In terms of processing, glycosylation is critical to maintaining the aqueous solubility of this protein, but does not directly contribute to its activity. Expressed by the venom gland.

The protein localises to the secreted. Its subcellular location is the target cell membrane. Neurotoxin that triggers pain behavior and inflammation in mammals, and is paralytic and lethal to insects. Causes a time-dependent increase in cell leak current. May act by targeting membranes. In Myrmecia gulosa (Red bulldog ant), this protein is U-myrmeciitoxin(01)-Mg7a.